The sequence spans 276 residues: 4-deoxy-L-threo-5-hexosulose-uronate ketol-isomerase 1 (276 aa).

Zn(2+)-binding residues include His194, His196, Glu201, and His243.

This sequence belongs to the KduI family. Zn(2+) is required as a cofactor.

It catalyses the reaction 5-dehydro-4-deoxy-D-glucuronate = 3-deoxy-D-glycero-2,5-hexodiulosonate. It functions in the pathway glycan metabolism; pectin degradation; 2-dehydro-3-deoxy-D-gluconate from pectin: step 4/5. Catalyzes the isomerization of 5-dehydro-4-deoxy-D-glucuronate to 3-deoxy-D-glycero-2,5-hexodiulosonate. In Enterococcus faecalis (strain ATCC 700802 / V583), this protein is 4-deoxy-L-threo-5-hexosulose-uronate ketol-isomerase 1 (kduI1).